Reading from the N-terminus, the 293-residue chain is MFEGIGTAIVTPFKEGKLDIESYEKLLNFQINNQINAIIVLGTTGEAPNISLDEREILIKKAKEVSGNKAKVIVGAGSNGINHTIELIKNAEKNGADGLLIVTPYYNKPTQNGLYEYYKYISEHTDLEIIVYNVPSRTGINILPETVYKIASDCKNVKALKEANSSFEQINKDLLLLKELKDFKIFSGNDDTAFQLLASGGDGVISVASNIIPLQMVQMFNFIKNGEIEKARNIHFSYYKLFKNLFIETNPIPVKAALSIMGFINNELRLPLVPASESTMKIITETLKGCGVI.

Thr44 serves as a coordination point for pyruvate. Tyr132 functions as the Proton donor/acceptor in the catalytic mechanism. Lys161 functions as the Schiff-base intermediate with substrate in the catalytic mechanism. Residue Ile205 coordinates pyruvate.

The protein belongs to the DapA family. Homotetramer; dimer of dimers.

Its subcellular location is the cytoplasm. It catalyses the reaction L-aspartate 4-semialdehyde + pyruvate = (2S,4S)-4-hydroxy-2,3,4,5-tetrahydrodipicolinate + H2O + H(+). The protein operates within amino-acid biosynthesis; L-lysine biosynthesis via DAP pathway; (S)-tetrahydrodipicolinate from L-aspartate: step 3/4. Catalyzes the condensation of (S)-aspartate-beta-semialdehyde [(S)-ASA] and pyruvate to 4-hydroxy-tetrahydrodipicolinate (HTPA). This chain is 4-hydroxy-tetrahydrodipicolinate synthase, found in Thermosipho africanus (strain TCF52B).